A 130-amino-acid chain; its full sequence is UPF0102 protein AHA_3896 (130 aa).

Belongs to the UPF0102 family.

This is UPF0102 protein AHA_3896 from Aeromonas hydrophila subsp. hydrophila (strain ATCC 7966 / DSM 30187 / BCRC 13018 / CCUG 14551 / JCM 1027 / KCTC 2358 / NCIMB 9240 / NCTC 8049).